Reading from the N-terminus, the 260-residue chain is Triosephosphate isomerase (260 aa).

Asn11–Lys13 contacts substrate. His103 (electrophile) is an active-site residue. The active-site Proton acceptor is the Glu175. Substrate is bound by residues Gly181, Ser220, and Gly241–Gly242.

This sequence belongs to the triosephosphate isomerase family. In terms of assembly, homodimer.

The protein localises to the cytoplasm. It catalyses the reaction D-glyceraldehyde 3-phosphate = dihydroxyacetone phosphate. Its pathway is carbohydrate biosynthesis; gluconeogenesis. It participates in carbohydrate degradation; glycolysis; D-glyceraldehyde 3-phosphate from glycerone phosphate: step 1/1. Its function is as follows. Involved in the gluconeogenesis. Catalyzes stereospecifically the conversion of dihydroxyacetone phosphate (DHAP) to D-glyceraldehyde-3-phosphate (G3P). This Shewanella sp. (strain W3-18-1) protein is Triosephosphate isomerase.